The sequence spans 493 residues: MSFKDLRSFIDHLEANGELKRISYPVDPHLEMTEIADRVLRAKGPALLFENPKNHHMPVLANLFGTPKRVAMALGKDDPLALREVGELLAFLKEPEPPRGFKDAIAKIPMFKQALNMPPKTVRNPPCQQIIKTGDEVDLTQLPIQHCWPGDVAPLVTWGLTITKGPRKSRQNLGIYRQQLLGKNKLIMRWLSHRGGALDFADFKEQFPGERYPVVVALGADPVTILGAVTPVPDSMSEYAFAGLLRGERTEVCKALSCDLEVPATSEIILEGYIDPEELAEEGPYGDHTGYYNETDKFPVFTVTHITQRKDAIYHSTYTGRPPDEPAMLGVALNEVFVPILRKQYPEIVDFYLPPEGCSYRMAVISIRKQYPGHAKRVMMGAWSFLRQFMYTKFIVIVDEDVNCRDWQDVIWAITTRMDPKRDTVMIENTPIDYLDFASPVAGLGSKMGLDATNKWEGETNREWGTPIVMDPKVKQKIDSIWDELGIDDSPTL.

Position 172 (Asn172) interacts with Mn(2+). Prenylated FMN contacts are provided by residues 175-177, 189-191, and 194-195; these read IYR, RWL, and RG. Glu238 contributes to the Mn(2+) binding site. The active-site Proton donor is Asp287.

This sequence belongs to the UbiD family. As to quaternary structure, homohexamer. Requires prenylated FMN as cofactor. It depends on Mn(2+) as a cofactor.

The protein localises to the cell membrane. It catalyses the reaction a 4-hydroxy-3-(all-trans-polyprenyl)benzoate + H(+) = a 2-(all-trans-polyprenyl)phenol + CO2. It participates in cofactor biosynthesis; ubiquinone biosynthesis. Catalyzes the decarboxylation of 3-octaprenyl-4-hydroxy benzoate to 2-octaprenylphenol, an intermediate step in ubiquinone biosynthesis. This is 3-octaprenyl-4-hydroxybenzoate carboxy-lyase from Shewanella putrefaciens (strain CN-32 / ATCC BAA-453).